Reading from the N-terminus, the 347-residue chain is uncharacterized protein (347 aa).

Its subcellular location is the cytoplasm. The protein resides in the nucleus. This is an uncharacterized protein from Schizosaccharomyces pombe (strain 972 / ATCC 24843) (Fission yeast).